A 305-amino-acid polypeptide reads, in one-letter code: Probable cell division protein WhiA (305 aa).

The H-T-H motif DNA-binding region spans 269 to 302; it reads TIKELGELLEPSLGKSGVNHRLRKLVEQANELRK.

This sequence belongs to the WhiA family.

In terms of biological role, involved in cell division and chromosome segregation. The protein is Probable cell division protein WhiA of Lactococcus lactis subsp. lactis (strain IL1403) (Streptococcus lactis).